The primary structure comprises 1062 residues: Valine--tRNA ligase, mitochondrial (1062 aa).

A mitochondrion-targeting transit peptide spans 1 to 15 (MPHLPLASFRPPLRG). The disordered stretch occupies residues 1-73 (MPHLPLASFR…AKGKPPAEST (73 aa)). Residues 42–56 (RNREAKQKRLREKQA) are compositionally biased toward basic and acidic residues. The 'HIGH' region motif lies at 146-156 (PNVTGSLHIGH). The 'KMSKS' region signature appears at 659–663 (KMSKS). Position 662 (Lys-662) interacts with ATP.

It belongs to the class-I aminoacyl-tRNA synthetase family.

Its subcellular location is the mitochondrion. The enzyme catalyses tRNA(Val) + L-valine + ATP = L-valyl-tRNA(Val) + AMP + diphosphate. Its function is as follows. Catalyzes the attachment of valine to tRNA(Val) in a two-step reaction: valine is first activated by ATP to form Val-AMP and then transferred to the acceptor end of tRNA(Val). The chain is Valine--tRNA ligase, mitochondrial (VARS2) from Sus scrofa (Pig).